The following is a 308-amino-acid chain: Porphobilinogen deaminase (308 aa).

S-(dipyrrolylmethanemethyl)cysteine is present on Cys-240.

The protein belongs to the HMBS family. In terms of assembly, monomer. Dipyrromethane serves as cofactor.

It catalyses the reaction 4 porphobilinogen + H2O = hydroxymethylbilane + 4 NH4(+). It functions in the pathway porphyrin-containing compound metabolism; protoporphyrin-IX biosynthesis; coproporphyrinogen-III from 5-aminolevulinate: step 2/4. Tetrapolymerization of the monopyrrole PBG into the hydroxymethylbilane pre-uroporphyrinogen in several discrete steps. This is Porphobilinogen deaminase from Campylobacter hominis (strain ATCC BAA-381 / DSM 21671 / CCUG 45161 / LMG 19568 / NCTC 13146 / CH001A).